We begin with the raw amino-acid sequence, 89 residues long: Small ribosomal subunit protein uS15 (89 aa).

This sequence belongs to the universal ribosomal protein uS15 family. In terms of assembly, part of the 30S ribosomal subunit. Forms a bridge to the 50S subunit in the 70S ribosome, contacting the 23S rRNA.

In terms of biological role, one of the primary rRNA binding proteins, it binds directly to 16S rRNA where it helps nucleate assembly of the platform of the 30S subunit by binding and bridging several RNA helices of the 16S rRNA. Functionally, forms an intersubunit bridge (bridge B4) with the 23S rRNA of the 50S subunit in the ribosome. In Staphylococcus carnosus (strain TM300), this protein is Small ribosomal subunit protein uS15.